A 375-amino-acid chain; its full sequence is POU domain, class 3, transcription factor 1-A (375 aa).

Disordered stretches follow at residues Met-1–Gln-29, Pro-67–Leu-138, and Met-151–Asp-200. 3 stretches are compositionally biased toward polar residues: residues Val-107–Trp-117, Ser-129–Leu-138, and Met-151–His-160. The segment covering Ser-162–Gln-177 has biased composition (basic and acidic residues). A POU-specific domain is found at Glu-194–Asp-268. Positions Lys-286 to Thr-345 form a DNA-binding region, homeobox.

Belongs to the POU transcription factor family. Class-3 subfamily. In embryos at the neural fold stage, localized primarily in the anterior neural plate, and localized mostly in the anterior region of the nerve cord of neurula stage embryos. In tailbud stages, expressed predominantly in the eye and brain, with weak expression along the length of the nerve cord. In adults, expressed in skin and brain.

Its subcellular location is the nucleus. Functionally, acts as a transcription factor. May play a role in neuronal differentiation. The protein is POU domain, class 3, transcription factor 1-A (pou3f1-a) of Xenopus laevis (African clawed frog).